We begin with the raw amino-acid sequence, 391 residues long: Pyruvate dehydrogenase E1 component subunit alpha type II, mitochondrial (391 aa).

The N-terminal 17 residues, 1 to 17 (SNIFKGPTVGSSVVAMS), are a transit peptide targeting the mitochondrion. The pyruvate site is built by H83, Y109, R110, G148, G156, V158, D187, G188, A189, N216, and Y218. Y109 and R110 together coordinate thiamine diphosphate. G156, V158, D187, G188, A189, and N216 together coordinate thiamine diphosphate. D187 is a binding site for Mg(2+). Positions 216 and 218 each coordinate Mg(2+). Residue H283 participates in thiamine diphosphate binding. Residues S284 and S291 each carry the phosphoserine modification.

As to quaternary structure, heterotetramer of two PDHA2 and two PDHB subunits. The heterotetramer interacts with DLAT, and is part of the multimeric pyruvate dehydrogenase complex that contains multiple copies of pyruvate dehydrogenase (E1), dihydrolipoamide acetyltransferase (DLAT, E2) and lipoamide dehydrogenase (DLD, E3). Thiamine diphosphate is required as a cofactor. Requires Mg(2+) as cofactor.

It is found in the mitochondrion matrix. It carries out the reaction N(6)-[(R)-lipoyl]-L-lysyl-[protein] + pyruvate + H(+) = N(6)-[(R)-S(8)-acetyldihydrolipoyl]-L-lysyl-[protein] + CO2. Its activity is regulated as follows. Pyruvate dehydrogenase activity is inhibited by phosphorylation of PDHA2; it is reactivated by dephosphorylation. Functionally, the pyruvate dehydrogenase complex catalyzes the overall conversion of pyruvate to acetyl-CoA and CO(2), and thereby links the glycolytic pathway to the tricarboxylic cycle. This is Pyruvate dehydrogenase E1 component subunit alpha type II, mitochondrial from Ascaris suum (Pig roundworm).